The primary structure comprises 222 residues: uncharacterized protein (222 aa).

This sequence belongs to the PhoU family.

Its subcellular location is the cytoplasm. Functionally, not known; probably involved in phosphate transport and/or metabolism. This is an uncharacterized protein from Deinococcus radiodurans (strain ATCC 13939 / DSM 20539 / JCM 16871 / CCUG 27074 / LMG 4051 / NBRC 15346 / NCIMB 9279 / VKM B-1422 / R1).